The following is a 245-amino-acid chain: Adenylate kinase (245 aa).

Residue 15 to 20 (GSGKGT) participates in ATP binding. The NMP stretch occupies residues 35–64 (SSGDLLRGAVSKDTPLSQEIKSYLDQGKLL). Residues Ser36, Arg41, 62–64 (KLL), 103–106 (GFPR), and Gln110 each bind AMP. An LID region spans residues 143–176 (SRYICPACQGIYNEQQGFSSCPKCSVELIRRSDD). Residue Arg144 participates in ATP binding. The Zn(2+) site is built by Cys147 and Cys150. 153–154 (IY) contributes to the ATP binding site. Cys163 and Cys166 together coordinate Zn(2+). Positions 173 and 184 each coordinate AMP. Residue Ala212 participates in ATP binding.

The protein belongs to the adenylate kinase family. Monomer.

It localises to the cytoplasm. It carries out the reaction AMP + ATP = 2 ADP. It functions in the pathway purine metabolism; AMP biosynthesis via salvage pathway; AMP from ADP: step 1/1. Functionally, catalyzes the reversible transfer of the terminal phosphate group between ATP and AMP. Plays an important role in cellular energy homeostasis and in adenine nucleotide metabolism. The sequence is that of Adenylate kinase from Chlamydia trachomatis serovar L2 (strain ATCC VR-902B / DSM 19102 / 434/Bu).